Reading from the N-terminus, the 201-residue chain is Retinol-binding protein 4 (201 aa).

Residues 1–18 (MEWVWALVLLAALGSAQA) form the signal peptide. 3 cysteine pairs are disulfide-bonded: Cys22–Cys178, Cys88–Cys192, and Cys138–Cys147. A substrate-binding site is contributed by Gln116. The residue at position 139 (Arg139) is an Omega-N-methylarginine.

It belongs to the calycin superfamily. Lipocalin family. In terms of assembly, interacts with TTR. Interaction with TTR prevents its loss by filtration through the kidney glomeruli. Interacts with STRA6.

The protein localises to the secreted. Its function is as follows. Retinol-binding protein that mediates retinol transport in blood plasma. Delivers retinol from the liver stores to the peripheral tissues. Transfers the bound all-trans retinol to STRA6, that then facilitates retinol transport across the cell membrane. This is Retinol-binding protein 4 (RBP4) from Sus scrofa (Pig).